The primary structure comprises 409 residues: MEEGGSTGSAGSDSSTSGSGGAQQRELERMAEVLVTGEQLRLRLHEEKVIKDRRHHLKTYPNCFVAKELIDWLIEHKEASDRETAIKLMQKLADRGIIHHVCDEHKEFKDVKLFYRFRKDDGTFPLDNEVKAFMRGQRLYEKLMSPENTLLQPREEEGVKYERTFMASEFLDWLVQEGEATTRKEAEQLCHRLMEHGIIQHVSNKHPFVDSNLLYQFRMNFRRRRRLMELLNEKSPSSQETHDSPFCLRKQSHDNRKSTSFMSVSPSKEIKIVSAVRRSSMSSCGSSGYFSSSPTLSSSPPVLCNPKSVLKRPVTSEELLTPGAPYARKTFTIVGDAVGWGFVVRGSKPCHIQAVDPSGPAAAAGMKVCQFVVSVNGLNVLHVDYRTVSNLILTGPRTIVMEVMEELEC.

N-acetylmethionine is present on Met1. Positions 1 to 25 (MEEGGSTGSAGSDSSTSGSGGAQQR) are disordered. DEP domains follow at residues 36-119 (TGEQ…RFRK) and 145-219 (SPEN…QFRM). Positions 217-235 (FRMNFRRRRRLMELLNEKS) match the DDEX motif motif. Ser235 carries the phosphoserine; by MAPK3 modification. Position 241 is a phosphothreonine (Thr241). Phosphoserine is present on residues Ser244 and Ser258. A Phosphothreonine modification is found at Thr259. Phosphoserine is present on residues Ser263, Ser265, Ser280, Ser282, and Ser283. Phosphoserine; by CK1 is present on residues Ser286 and Ser287. The short motif at 286 to 291 (SSGYFS) is the BetaTrCP degron motif element. At Tyr289 the chain carries Phosphotyrosine; by SYK. The residue at position 291 (Ser291) is a Phosphoserine; by CK1. Ser293 is subject to Phosphoserine; by MTOR. Phosphothreonine; by MTOR is present on Thr295. 2 positions are modified to phosphoserine: Ser297 and Ser298. Ser299 carries the phosphoserine; by MTOR modification. One can recognise a PDZ domain in the interval 330–407 (TFTIVGDAVG…TIVMEVMEEL (78 aa)).

Associated component of the mechanistic target of rapamycin complex 1 (mTORC1) which contains MTOR, MLST8 and RPTOR. Associated component of the mechanistic target of rapamycin complex 2 (mTORC2) which contains MTOR, MLST8, PROTOR1, RICTOR, MAPKAP1 and DEPTOR. Interacts (via PDZ domain) with MTOR; interacts with MTOR within both mTORC1 and mTORC2. Interacts (via PDZ domain) with MINAR1 (via N-terminus). Interacts with SIK3. Post-translationally, phosphorylation weakens interaction with MTOR within mTORC1 and mTORC2. Phosphorylated at Ser-286, Ser-287 and Ser-291 in response to mitogenic stimulation by MTOR: DEPTOR is either directly phosphorylated by MTOR or indirectly via proteins kinases that are activated by MTOR, such as CK1/CSNK1A1. Phosphorylation at Ser-286, Ser-287 and Ser-291 promotes ubiquitination by the SCF(BTRC) complex, followed by degradation. Phosphorylation at Ser-235 by MAPK3/ERK1 promotes deubiquitination by USP7, enhancing its stability. Phosphorylation at Tyr-289 by SYK impairs its interaction with MTOR, promoting mTORC1 and mTORC2 signaling. In terms of processing, ubiquitinated; leading to proteasomal degradation. Ubiquitination by the SCF(BTRC) and SCF(FBXW11) complexes following phosphorylation at Ser-286, Ser-287 and Ser-291 by MTOR, leads to its degradation by the proteasome. Deubiquitinated by OTUB1 in response to amino acid via a non-canonical mechanism, leading to DEPTOR stability. Deubiquitinated by USP7 following phosphorylation at Ser-235, promoting its stability.

The protein localises to the lysosome membrane. With respect to regulation, inhibited upon phosphatidic acid-binding: phosphatidic acid produced upon mitogenic stimulation promotes DEPTOR dissociatiom from the mTORC1 and mTORC2 complexes, leading to their activation. Specifically binds unsaturated phosphatidic acid, such as 16:0-18:1, 18:0-18:1 and di-18:1. Inhibited when nutrients are present via a feedback loop: phosphorylation by MTOR promotes DEPTOR ubiquitination and degradation. In terms of biological role, negative regulator of the mTORC1 and mTORC2 complexes: inhibits the protein kinase activity of MTOR, thereby inactivating both complexes. DEPTOR inhibits mTORC1 and mTORC2 to induce autophagy. In contrast to AKT1S1/PRAS40, only partially inhibits mTORC1 activity. The chain is DEP domain-containing mTOR-interacting protein from Homo sapiens (Human).